The sequence spans 150 residues: Arginine repressor (150 aa).

This sequence belongs to the ArgR family.

The protein resides in the cytoplasm. It participates in amino-acid biosynthesis; L-arginine biosynthesis [regulation]. Its function is as follows. Regulates arginine biosynthesis genes. The chain is Arginine repressor from Staphylococcus epidermidis (strain ATCC 35984 / DSM 28319 / BCRC 17069 / CCUG 31568 / BM 3577 / RP62A).